The sequence spans 135 residues: Probable transporter XF_0766 (135 aa).

The next 4 helical transmembrane spans lie at 4–24 (YWYPILGGILLGLSTVMLLLL), 45–65 (AQDIPFVVGLVLGPLVFSVIF), 71–91 (VTVAATWPTIIVAGLLVGLGT), and 114–134 (IVATAIFLISGMATATFMGVY).

It belongs to the TsuA/YedE (TC 9.B.102) family.

It localises to the cell inner membrane. This chain is Probable transporter XF_0766, found in Xylella fastidiosa (strain 9a5c).